We begin with the raw amino-acid sequence, 294 residues long: Glutamyl-Q tRNA(Asp) synthetase (294 aa).

Residues 8-12 (RFAPT) and Glu44 each bind L-glutamate. The short motif at 11 to 21 (PTPSGYLHFGS) is the 'HIGH' region element. 4 residues coordinate Zn(2+): Cys100, Cys102, Tyr114, and Cys118. Residues Tyr171 and Arg189 each coordinate L-glutamate. Residues 227-231 (KLGKS) carry the 'KMSKS' region motif. Lys230 lines the ATP pocket.

Belongs to the class-I aminoacyl-tRNA synthetase family. GluQ subfamily. Zn(2+) is required as a cofactor.

Catalyzes the tRNA-independent activation of glutamate in presence of ATP and the subsequent transfer of glutamate onto a tRNA(Asp). Glutamate is transferred on the 2-amino-5-(4,5-dihydroxy-2-cyclopenten-1-yl) moiety of the queuosine in the wobble position of the QUC anticodon. The polypeptide is Glutamyl-Q tRNA(Asp) synthetase (Ectopseudomonas mendocina (strain ymp) (Pseudomonas mendocina)).